A 149-amino-acid chain; its full sequence is Pleckstrin homology domain-containing family J member 1 (149 aa).

Residues 15 to 108 (PAEKAAEILM…WIEALKRASY (94 aa)) form the PH domain.

This Gallus gallus (Chicken) protein is Pleckstrin homology domain-containing family J member 1 (PLEKHJ1).